The following is a 70-amino-acid chain: NAD(P)H-quinone oxidoreductase subunit L (70 aa).

2 consecutive transmembrane segments (helical) span residues 2 to 22 (IVPLLYLALAGAYLLVVPVAL) and 39 to 59 (TFMYFLVFLFFPGLLVLSPFV).

The protein belongs to the complex I NdhL subunit family. NDH-1 can be composed of about 15 different subunits; different subcomplexes with different compositions have been identified which probably have different functions.

It is found in the cellular thylakoid membrane. It carries out the reaction a plastoquinone + NADH + (n+1) H(+)(in) = a plastoquinol + NAD(+) + n H(+)(out). The enzyme catalyses a plastoquinone + NADPH + (n+1) H(+)(in) = a plastoquinol + NADP(+) + n H(+)(out). Functionally, NDH-1 shuttles electrons from an unknown electron donor, via FMN and iron-sulfur (Fe-S) centers, to quinones in the respiratory and/or the photosynthetic chain. The immediate electron acceptor for the enzyme in this species is believed to be plastoquinone. Couples the redox reaction to proton translocation, and thus conserves the redox energy in a proton gradient. Cyanobacterial NDH-1 also plays a role in inorganic carbon-concentration. The chain is NAD(P)H-quinone oxidoreductase subunit L from Trichormus variabilis (strain ATCC 29413 / PCC 7937) (Anabaena variabilis).